We begin with the raw amino-acid sequence, 222 residues long: MKNPPVCCVITRLPEAESLKKSEGAAFYELRLDLLGESWREAAAMLDKPFMATCRRSAEGGSFSGSEEERIGLLEKAAAAGAFMLDIEYSTPHLGEVLKRLRTQSKCLVSHHNFADTPSAGDLKTLVKDMLNYPADIYKVITTATSINDNIKLLNLIKEIPDKKIVAFAMGNLGILSRILCPLAGSPFTYASLNDSNQSASGQMTLAQMIEIYRSVNYENHT.

Residues 29-31 (ELR) and Arg-55 contribute to the 3-dehydroquinate site. The active-site Proton donor/acceptor is His-112. Residue Lys-139 is the Schiff-base intermediate with substrate of the active site. The 3-dehydroquinate site is built by Arg-178, Ser-199, and Gln-203.

Belongs to the type-I 3-dehydroquinase family. As to quaternary structure, homodimer.

It catalyses the reaction 3-dehydroquinate = 3-dehydroshikimate + H2O. The protein operates within metabolic intermediate biosynthesis; chorismate biosynthesis; chorismate from D-erythrose 4-phosphate and phosphoenolpyruvate: step 3/7. Functionally, involved in the third step of the chorismate pathway, which leads to the biosynthesis of aromatic amino acids. Catalyzes the cis-dehydration of 3-dehydroquinate (DHQ) and introduces the first double bond of the aromatic ring to yield 3-dehydroshikimate. This Dehalococcoides mccartyi (strain ATCC BAA-2266 / KCTC 15142 / 195) (Dehalococcoides ethenogenes (strain 195)) protein is 3-dehydroquinate dehydratase.